The following is a 376-amino-acid chain: MSQDVLTLAQDLISRESVTPLDEGCQQLMADRLSAKGFDIESMVFDDTTNMWARRGNSGPLFCFAGHTDVVPVGDLNRWHTPPFDPVVIDGYLHGRGAADMKGSLAAMLVATERFVEKHPDHNGSIAFLITSDEEGPFINGTTRVIDTLEARNEKITWALVGEPSSTHKLGDIVKNGRRGSLTGNLTVNGIQGHVAYPHLADNPIHNAAPALDELARMKWDNGNEFFPPTSFQIANINGGTGASNVIPGSLEVMFNFRYSTEVTAEELIKRVLNILDAHGLDYDISWTFNGLPFLTGEGPLLDATRDAIKQVTGTDTDPQTSGGTSDGRFIAPTGAHVIELGPVNATIHKVNECVKVADLEQLALCYEVILEKLLC.

Residue His-67 coordinates Zn(2+). The active site involves Asp-69. Asp-100 lines the Zn(2+) pocket. Glu-134 (proton acceptor) is an active-site residue. Zn(2+) contacts are provided by Glu-135, Glu-163, and His-349.

The protein belongs to the peptidase M20A family. DapE subfamily. As to quaternary structure, homodimer. The cofactor is Zn(2+). Requires Co(2+) as cofactor.

The enzyme catalyses N-succinyl-(2S,6S)-2,6-diaminopimelate + H2O = (2S,6S)-2,6-diaminopimelate + succinate. It functions in the pathway amino-acid biosynthesis; L-lysine biosynthesis via DAP pathway; LL-2,6-diaminopimelate from (S)-tetrahydrodipicolinate (succinylase route): step 3/3. Its function is as follows. Catalyzes the hydrolysis of N-succinyl-L,L-diaminopimelic acid (SDAP), forming succinate and LL-2,6-diaminopimelate (DAP), an intermediate involved in the bacterial biosynthesis of lysine and meso-diaminopimelic acid, an essential component of bacterial cell walls. The chain is Succinyl-diaminopimelate desuccinylase from Shewanella sediminis (strain HAW-EB3).